Reading from the N-terminus, the 316-residue chain is UPF0725 protein At1g02770 (316 aa).

This sequence belongs to the UPF0725 (EMB2204) family.

This Arabidopsis thaliana (Mouse-ear cress) protein is UPF0725 protein At1g02770.